A 588-amino-acid chain; its full sequence is Pectinesterase 4 (588 aa).

The signal sequence occupies residues 1 to 24 (MIGKVVVSVASILLIVGVAIGVVA). Residues Asn86, Asn206, and Asn342 are each glycosylated (N-linked (GlcNAc...) asparagine). Thr353 and Gln383 together coordinate substrate. Asp406 acts as the Proton donor in catalysis. The active-site Nucleophile is Asp427. Arg496 and Trp498 together coordinate substrate.

The protein in the N-terminal section; belongs to the PMEI family. In the C-terminal section; belongs to the pectinesterase family. Expressed in pollen grains and pollen tubes.

The protein resides in the secreted. The protein localises to the cell wall. It carries out the reaction [(1-&gt;4)-alpha-D-galacturonosyl methyl ester](n) + n H2O = [(1-&gt;4)-alpha-D-galacturonosyl](n) + n methanol + n H(+). Its pathway is glycan metabolism; pectin degradation; 2-dehydro-3-deoxy-D-gluconate from pectin: step 1/5. Functionally, acts in the modification of cell walls via demethylesterification of cell wall pectin. Plays an important role in growth of pollen tubes in female floral tissues, possibly via enhancing the interaction between the pollen tube and female floral tissues by modification of the cell walls. In Arabidopsis thaliana (Mouse-ear cress), this protein is Pectinesterase 4 (PME4).